Consider the following 81-residue polypeptide: ATP synthase subunit c (81 aa).

The next 2 helical transmembrane spans lie at 5-25 and 57-77; these read IAAGALIGGGLIMAGGAIGAG and VGLVEAAYFINLAFMALFVFA.

It belongs to the ATPase C chain family. As to quaternary structure, F-type ATPases have 2 components, F(1) - the catalytic core - and F(0) - the membrane proton channel. F(1) has five subunits: alpha(3), beta(3), gamma(1), delta(1), epsilon(1). F(0) has three main subunits: a(1), b(2) and c(10-14). The alpha and beta chains form an alternating ring which encloses part of the gamma chain. F(1) is attached to F(0) by a central stalk formed by the gamma and epsilon chains, while a peripheral stalk is formed by the delta and b chains.

It localises to the cell membrane. In terms of biological role, f(1)F(0) ATP synthase produces ATP from ADP in the presence of a proton or sodium gradient. F-type ATPases consist of two structural domains, F(1) containing the extramembraneous catalytic core and F(0) containing the membrane proton channel, linked together by a central stalk and a peripheral stalk. During catalysis, ATP synthesis in the catalytic domain of F(1) is coupled via a rotary mechanism of the central stalk subunits to proton translocation. Functionally, key component of the F(0) channel; it plays a direct role in translocation across the membrane. A homomeric c-ring of between 10-14 subunits forms the central stalk rotor element with the F(1) delta and epsilon subunits. In Mycolicibacterium gilvum (strain PYR-GCK) (Mycobacterium gilvum (strain PYR-GCK)), this protein is ATP synthase subunit c.